The primary structure comprises 189 residues: Calcium and integrin-binding family member 2 (189 aa).

3 EF-hand domains span residues 68–103 (RENP…FSEQ), 105–140 (PRDI…MTKN), and 146–181 (EHQQ…APDF). Ca(2+) is bound by residues aspartate 118, aspartate 120, aspartate 122, aspartate 129, aspartate 159, aspartate 161, aspartate 163, lysine 165, and glutamate 170.

As to quaternary structure, monomer. Homodimer.

The protein localises to the cytoplasm. Calcium- and integrin-binding protein. Plays a role in intracellular calcium homeostasis. Critical for proper photoreceptor cell maintenance and function. Required for prevention of light-dependent retinal degeneration. The protein is Calcium and integrin-binding family member 2 of Drosophila melanogaster (Fruit fly).